The primary structure comprises 490 residues: Aspartyl/glutamyl-tRNA(Asn/Gln) amidotransferase subunit B (490 aa).

Belongs to the GatB/GatE family. GatB subfamily. Heterotrimer of A, B and C subunits.

It carries out the reaction L-glutamyl-tRNA(Gln) + L-glutamine + ATP + H2O = L-glutaminyl-tRNA(Gln) + L-glutamate + ADP + phosphate + H(+). The enzyme catalyses L-aspartyl-tRNA(Asn) + L-glutamine + ATP + H2O = L-asparaginyl-tRNA(Asn) + L-glutamate + ADP + phosphate + 2 H(+). In terms of biological role, allows the formation of correctly charged Asn-tRNA(Asn) or Gln-tRNA(Gln) through the transamidation of misacylated Asp-tRNA(Asn) or Glu-tRNA(Gln) in organisms which lack either or both of asparaginyl-tRNA or glutaminyl-tRNA synthetases. The reaction takes place in the presence of glutamine and ATP through an activated phospho-Asp-tRNA(Asn) or phospho-Glu-tRNA(Gln). This Prochlorococcus marinus (strain MIT 9515) protein is Aspartyl/glutamyl-tRNA(Asn/Gln) amidotransferase subunit B.